The sequence spans 193 residues: Putative protein-glutamate methylesterase/protein-glutamine glutaminase (193 aa).

The CheB-type methylesterase domain maps to 1–179 (MNYEAIVIGV…DYVLSLEKIA (179 aa)). Catalysis depends on residues Ser11, His38, and Asp131.

Belongs to the CheB family.

It is found in the cytoplasm. It catalyses the reaction [protein]-L-glutamate 5-O-methyl ester + H2O = L-glutamyl-[protein] + methanol + H(+). The enzyme catalyses L-glutaminyl-[protein] + H2O = L-glutamyl-[protein] + NH4(+). Functionally, may be involved in chemotaxis. The sequence is that of Putative protein-glutamate methylesterase/protein-glutamine glutaminase (cheB2) from Leptospira interrogans serogroup Icterohaemorrhagiae serovar copenhageni (strain Fiocruz L1-130).